Consider the following 179-residue polypeptide: SCAN domain-containing protein 1 (179 aa).

A disordered region spans residues 1–104 (MAATEPILAA…PGPAGSRLGP (104 aa)). Residues 52 to 80 (SPNAAVPEAIPTPRAAASAALELPLGPAP) show a composition bias toward low complexity. The SCAN box domain occupies 108–166 (RQRFRQFRYQDAAGPREAFRQLRELSRQWLRPDIRTKEQIVEMLVQEQLLAILPEAARA).

Interacts with ZNF202.

The protein localises to the nucleus. In terms of biological role, may regulate transcriptional activity. This is SCAN domain-containing protein 1 (SCAND1) from Homo sapiens (Human).